Here is a 60-residue protein sequence, read N- to C-terminus: Ferredoxin-1 (60 aa).

4Fe-4S ferredoxin-type domains follow at residues 2-27 (LYIT…SAGD) and 28-60 (DIYV…IVQG). [4Fe-4S] cluster contacts are provided by cysteine 8, cysteine 11, cysteine 14, cysteine 18, cysteine 37, cysteine 40, cysteine 48, and cysteine 52.

The cofactor is [4Fe-4S] cluster.

In terms of biological role, ferredoxins are iron-sulfur proteins that transfer electrons in a wide variety of metabolic reactions. The chain is Ferredoxin-1 from Chlorobium limicola.